The chain runs to 209 residues: MNGHFISFEGPDGAGKTTVLQAMVEHYQQRLKDQLTVTREPGGNPISEAIRTIILDKNNTEMDERTEALLYAAARRQHLVETILPALKKNHVVFCDRFVDSSIAYQGAGRKIGTDAVYQMNLFATEGALPEKTIYLDVPSELGLKRIMTHRTEDVDRLDLEQLDFHQRVRSAYLDLAKKFPDRIVVIDASQELDDVKRDVIEVLDQILN.

G10–T17 contacts ATP.

This sequence belongs to the thymidylate kinase family.

The enzyme catalyses dTMP + ATP = dTDP + ADP. In terms of biological role, phosphorylation of dTMP to form dTDP in both de novo and salvage pathways of dTTP synthesis. The sequence is that of Thymidylate kinase from Pediococcus pentosaceus (strain ATCC 25745 / CCUG 21536 / LMG 10740 / 183-1w).